The following is a 322-amino-acid chain: Lipoyl synthase (322 aa).

The [4Fe-4S] cluster site is built by C66, C71, C77, C92, C96, C99, and S306. The region spanning 78–295 (FSKGTATFMI…EKEAYELGFS (218 aa)) is the Radical SAM core domain.

Belongs to the radical SAM superfamily. Lipoyl synthase family. It depends on [4Fe-4S] cluster as a cofactor.

The protein localises to the cytoplasm. It catalyses the reaction [[Fe-S] cluster scaffold protein carrying a second [4Fe-4S](2+) cluster] + N(6)-octanoyl-L-lysyl-[protein] + 2 oxidized [2Fe-2S]-[ferredoxin] + 2 S-adenosyl-L-methionine + 4 H(+) = [[Fe-S] cluster scaffold protein] + N(6)-[(R)-dihydrolipoyl]-L-lysyl-[protein] + 4 Fe(3+) + 2 hydrogen sulfide + 2 5'-deoxyadenosine + 2 L-methionine + 2 reduced [2Fe-2S]-[ferredoxin]. It participates in protein modification; protein lipoylation via endogenous pathway; protein N(6)-(lipoyl)lysine from octanoyl-[acyl-carrier-protein]: step 2/2. Catalyzes the radical-mediated insertion of two sulfur atoms into the C-6 and C-8 positions of the octanoyl moiety bound to the lipoyl domains of lipoate-dependent enzymes, thereby converting the octanoylated domains into lipoylated derivatives. The chain is Lipoyl synthase from Neisseria meningitidis serogroup C (strain 053442).